Reading from the N-terminus, the 178-residue chain is Protein GrpE (178 aa).

The span at Met-1–Pro-11 shows a compositional bias: pro residues. The tract at residues Met-1–Ala-23 is disordered.

Belongs to the GrpE family. Homodimer.

It localises to the cytoplasm. Participates actively in the response to hyperosmotic and heat shock by preventing the aggregation of stress-denatured proteins, in association with DnaK and GrpE. It is the nucleotide exchange factor for DnaK and may function as a thermosensor. Unfolded proteins bind initially to DnaJ; upon interaction with the DnaJ-bound protein, DnaK hydrolyzes its bound ATP, resulting in the formation of a stable complex. GrpE releases ADP from DnaK; ATP binding to DnaK triggers the release of the substrate protein, thus completing the reaction cycle. Several rounds of ATP-dependent interactions between DnaJ, DnaK and GrpE are required for fully efficient folding. The polypeptide is Protein GrpE (Acidovorax sp. (strain JS42)).